The sequence spans 615 residues: 1-deoxy-D-xylulose-5-phosphate synthase (615 aa).

Residues His-76 and 117–119 (GHS) each bind thiamine diphosphate. Residue Asp-148 participates in Mg(2+) binding. Residues 149 to 150 (GA), Asn-177, Tyr-284, and Glu-365 each bind thiamine diphosphate. Asn-177 lines the Mg(2+) pocket.

This sequence belongs to the transketolase family. DXPS subfamily. As to quaternary structure, homodimer. Mg(2+) is required as a cofactor. Requires thiamine diphosphate as cofactor.

It carries out the reaction D-glyceraldehyde 3-phosphate + pyruvate + H(+) = 1-deoxy-D-xylulose 5-phosphate + CO2. The protein operates within metabolic intermediate biosynthesis; 1-deoxy-D-xylulose 5-phosphate biosynthesis; 1-deoxy-D-xylulose 5-phosphate from D-glyceraldehyde 3-phosphate and pyruvate: step 1/1. Catalyzes the acyloin condensation reaction between C atoms 2 and 3 of pyruvate and glyceraldehyde 3-phosphate to yield 1-deoxy-D-xylulose-5-phosphate (DXP). The chain is 1-deoxy-D-xylulose-5-phosphate synthase from Francisella tularensis subsp. holarctica (strain FTNF002-00 / FTA).